The sequence spans 500 residues: Glutamate--tRNA ligase (500 aa).

The 'HIGH' region motif lies at 12-22 (PSPTGHLHIGN). Residues 259–263 (KLSKR) carry the 'KMSKS' region motif. Lys262 is an ATP binding site.

The protein belongs to the class-I aminoacyl-tRNA synthetase family. Glutamate--tRNA ligase type 1 subfamily. As to quaternary structure, monomer.

The protein localises to the cytoplasm. The enzyme catalyses tRNA(Glu) + L-glutamate + ATP = L-glutamyl-tRNA(Glu) + AMP + diphosphate. In terms of biological role, catalyzes the attachment of glutamate to tRNA(Glu) in a two-step reaction: glutamate is first activated by ATP to form Glu-AMP and then transferred to the acceptor end of tRNA(Glu). The chain is Glutamate--tRNA ligase from Lactobacillus delbrueckii subsp. bulgaricus (strain ATCC BAA-365 / Lb-18).